The following is a 309-amino-acid chain: Olfactory receptor 8A1 (309 aa).

Over Met-1–Phe-28 the chain is Extracellular. Residues Leu-29 to Ile-49 form a helical membrane-spanning segment. At Gly-50–His-56 the chain is on the cytoplasmic side. A helical membrane pass occupies residues Thr-57–Ile-77. At Thr-78–Asn-90 the chain is on the extracellular side. Residues Leu-91–Glu-111 form a helical membrane-spanning segment. An intrachain disulfide couples Cys-97 to Cys-188. Residues Cys-112–Asn-133 are Cytoplasmic-facing. A helical membrane pass occupies residues Ile-134–Ile-154. Over Gly-155–Glu-195 the chain is Extracellular. A helical membrane pass occupies residues Met-196–Ser-216. Over Tyr-217 to Ser-238 the chain is Cytoplasmic. The helical transmembrane segment at Thr-239–Leu-259 threads the bilayer. The Extracellular segment spans residues Lys-260 to Glu-270. The helical transmembrane segment at Asn-271–Leu-291 threads the bilayer. Over Arg-292 to Phe-309 the chain is Cytoplasmic.

The protein belongs to the G-protein coupled receptor 1 family.

It localises to the cell membrane. Functionally, odorant receptor. This Mus musculus (Mouse) protein is Olfactory receptor 8A1.